Here is a 230-residue protein sequence, read N- to C-terminus: Cytidylate kinase (230 aa).

Residue 12–20 (GPSGAGKGT) participates in ATP binding.

The protein belongs to the cytidylate kinase family. Type 1 subfamily.

It localises to the cytoplasm. It carries out the reaction CMP + ATP = CDP + ADP. The catalysed reaction is dCMP + ATP = dCDP + ADP. The polypeptide is Cytidylate kinase (Shewanella putrefaciens (strain CN-32 / ATCC BAA-453)).